We begin with the raw amino-acid sequence, 398 residues long: Acetate kinase (398 aa).

Asn7 contributes to the Mg(2+) binding site. Residue Lys14 participates in ATP binding. Arg91 provides a ligand contact to substrate. Catalysis depends on Asp148, which acts as the Proton donor/acceptor. ATP contacts are provided by residues His208 to Gly212, Asp283 to Arg285, and Gly331 to Asn335. Glu384 serves as a coordination point for Mg(2+).

It belongs to the acetokinase family. As to quaternary structure, homodimer. The cofactor is Mg(2+). Requires Mn(2+) as cofactor.

It is found in the cytoplasm. It carries out the reaction acetate + ATP = acetyl phosphate + ADP. The protein operates within metabolic intermediate biosynthesis; acetyl-CoA biosynthesis; acetyl-CoA from acetate: step 1/2. Its function is as follows. Catalyzes the formation of acetyl phosphate from acetate and ATP. Can also catalyze the reverse reaction. The protein is Acetate kinase of Bacteroides fragilis (strain ATCC 25285 / DSM 2151 / CCUG 4856 / JCM 11019 / LMG 10263 / NCTC 9343 / Onslow / VPI 2553 / EN-2).